Here is a 318-residue protein sequence, read N- to C-terminus: Pyrimidine-specific ribonucleoside hydrolase RihA (318 aa).

Residue His240 is part of the active site.

Belongs to the IUNH family. RihA subfamily.

In terms of biological role, hydrolyzes cytidine or uridine to ribose and cytosine or uracil, respectively. The sequence is that of Pyrimidine-specific ribonucleoside hydrolase RihA from Shewanella baltica (strain OS155 / ATCC BAA-1091).